Here is a 356-residue protein sequence, read N- to C-terminus: Glutamine synthetase (356 aa).

Residues I19–G99 form the GS beta-grasp domain. One can recognise a GS catalytic domain in the interval K106–P356.

It belongs to the glutamine synthetase family. As to quaternary structure, homooctamer.

It is found in the cytoplasm. The enzyme catalyses L-glutamate + NH4(+) + ATP = L-glutamine + ADP + phosphate + H(+). This chain is Glutamine synthetase, found in Hordeum vulgare (Barley).